The following is a 1630-amino-acid chain: Merozoite surface protein 1 (1630 aa).

The first 19 residues, M1–C19, serve as a signal peptide directing secretion. The tract at residues T60–A113 is disordered. The tract at residues S67–T84 is tripeptide SG(TP) repeat. Positions S67–S88 are enriched in low complexity. Residues R89 to T98 show a composition bias toward polar residues. Residue N97 is glycosylated (N-linked (GlcNAc...) asparagine). The span at S99–A108 shows a compositional bias: low complexity. N259 carries N-linked (GlcNAc...) asparagine glycosylation. Residues K680–N755 are disordered. Polar residues-rich tracts occupy residues T685–S695 and G702–G713. Over residues V721–Q732 the composition is skewed to low complexity. N-linked (GlcNAc...) asparagine glycosylation is found at N755, N759, N774, and N835. Residues S884–H906 form a disordered region. Residues N911, N955, N1049, N1156, and N1165 are each glycosylated (N-linked (GlcNAc...) asparagine). A required for binding to host erythrocyte cell membrane region spans residues Q993 to Y1107. Residues V1190–P1203 are compositionally biased toward polar residues. Residues V1190 to T1220 are disordered. N1436 and N1517 each carry an N-linked (GlcNAc...) asparagine glycan. 2 consecutive EGF-like domains span residues H1521–P1561 and N1562–S1610. 6 cysteine pairs are disulfide-bonded: C1523–C1534, C1528–C1544, C1546–C1557, C1565–C1578, C1572–C1592, and C1594–C1608. S1609 is lipidated: GPI-anchor amidated serine. The propeptide at S1610 to I1630 is removed in mature form.

Forms a complex composed of subunits p83, p30, p38, and p42 which remain non-covalently associated; the complex is formed at the merozoite surface prior to egress from host erythrocytes. Forms a complex composed of processed MSP1 subunits, MSP6 subunit p36 and MSP7; the complex is formed at the merozoite surface prior to egress from host erythrocytes. Within the complex, interacts (via subunit p38) with MSP6 subunit p36 and (via subunits p83, p30 and p38) with MSP7 (via subunit p22). Forms a complex composed of MSP1, MSP6, DBLMSP1 and DBLMSP2. Within the complex, interacts (via subunit p38) with DBLMSP1 and DBLMSP2. Forms a complex composed of MSP1, and rhoptry proteins RhopH3, RAP1 and CLAG9/RhopH3. Within the complex, interacts (via subunits p42 and p19) with RhopH3 (via C-terminus). Forms a complex composed of MSP1, MSP6, MSP7, MSP9 and MSP3; within the complex, MSP6 and MSP9 mediate the binding to the host erythrocyte. Interacts (via subunits p19 and p42) with MSP9; the interaction is direct; MSP1 subunits p19 or p42, and MSP9 form a co-ligand complex that interacts with host SLC4A1/Band 3 protein. May interact with PFD6. Interacts with host spectrin. As to quaternary structure, interacts with host glycophorin GYPA in a sialic acid-independent manner. In terms of assembly, interacts with host proinflammatory cytokine S100P; the interaction blocks S100P inflammatory and chemotactic activities. Interacts with host SLC4A1/Band 3 (via 5ABC region) on the host erythrocyte surface in a sialic acid-independent manner. The p190 precursor is cleaved by SUB1 prior to merozoite egress into 4 subunits p83, p30, p38, and p42 which remain non-covalently associated. SUB1-mediated proteolytic cleavage occurs in an orderly manner; the first cleavage occurs at the p83/p30 site, followed by cleavage at the p30/p38 site, the last cleavage occurs at the p38/p42 site. The order of cleavage is essential for parasite viability. SUB1-mediated processing is essential for merozoite egress. In a second processing step during erythrocyte invasion, p42 is cleaved by SUB2 into p33 and p19; the latter remains attached to the merozoite surface via its GPI-anchor and stays on the surface during the subsequent ring stage.

The protein resides in the cell membrane. It is found in the secreted. It localises to the vacuole membrane. Its function is as follows. During the asexual blood stage, involved in merozoite egress from host erythrocytes possibly via its interaction with the host cytoskeleton protein spectrin resulting in the destabilization of the host cytoskeleton and thus leading to erythrocyte cell membrane rupture. Involved in the binding to host erythrocytes and is required for host erythrocyte invasion. In terms of biological role, by binding to host proinflammatory cytokine S100P may interfere with host immune responses. Functionally, involved in merozoite invasion of host erythrocytes. May play a role in the biogenesis and/or function of the food vacuole during the intraerythrocytic development. The polypeptide is Merozoite surface protein 1 (Plasmodium falciparum (isolate K1 / Thailand)).